Here is a 178-residue protein sequence, read N- to C-terminus: CDP-archaeol synthase (178 aa).

A run of 5 helical transmembrane segments spans residues 3–23 (LLLL…ANAV), 56–76 (FFGI…VILY), 87–107 (LFGY…GDML), 123–145 (APIL…FYPL), and 150–169 (IVLL…IIAY).

The protein belongs to the CDP-archaeol synthase family. It depends on Mg(2+) as a cofactor.

Its subcellular location is the cell membrane. The catalysed reaction is 2,3-bis-O-(geranylgeranyl)-sn-glycerol 1-phosphate + CTP + H(+) = CDP-2,3-bis-O-(geranylgeranyl)-sn-glycerol + diphosphate. It functions in the pathway membrane lipid metabolism; glycerophospholipid metabolism. In terms of biological role, catalyzes the formation of CDP-2,3-bis-(O-geranylgeranyl)-sn-glycerol (CDP-archaeol) from 2,3-bis-(O-geranylgeranyl)-sn-glycerol 1-phosphate (DGGGP) and CTP. This reaction is the third ether-bond-formation step in the biosynthesis of archaeal membrane lipids. The polypeptide is CDP-archaeol synthase (Methanococcus maripaludis (strain C6 / ATCC BAA-1332)).